A 345-amino-acid polypeptide reads, in one-letter code: MVRNWCSLIRPRRIEIDESTHTRFYGEFVCQPLERGFGITLGNALRRVLLSSIQGAAIVSVKIDNVLHEFSTVPGVKEDITDIILNLKGVRLKLLSDGPRVIRIDTKKEGVITAADIITDGTVEVLNEDHYIASLSGDMPFRMEMVVNSGRGYVQAKKEKDVDQPEGTINIDALYSPIKKVNYTVTHARVGQIADYDKLSLEVWTDGNVLPEDAVAFAAKILKKQLQVFVGLHTVIGTEEVEEEEEGEAVSEKENLNDILLRHVEDLELSVRSANCLKNAGINLIGELVQKSEAEMLKTKNFGRKSLSEIKEILAEYGLTFGMKLEFTPWNKDVREEMGEIQEEG.

Residues 1–233 are alpha N-terminal domain (alpha-NTD); it reads MVRNWCSLIR…KQLQVFVGLH (233 aa). Residues 256 to 345 are alpha C-terminal domain (alpha-CTD); the sequence is LNDILLRHVE…EEMGEIQEEG (90 aa).

It belongs to the RNA polymerase alpha chain family. In terms of assembly, homodimer. The RNAP catalytic core consists of 2 alpha, 1 beta, 1 beta' and 1 omega subunit. When a sigma factor is associated with the core the holoenzyme is formed, which can initiate transcription.

It catalyses the reaction RNA(n) + a ribonucleoside 5'-triphosphate = RNA(n+1) + diphosphate. DNA-dependent RNA polymerase catalyzes the transcription of DNA into RNA using the four ribonucleoside triphosphates as substrates. The chain is DNA-directed RNA polymerase subunit alpha from Syntrophus aciditrophicus (strain SB).